A 46-amino-acid chain; its full sequence is Antimicrobial peptide eNAP-1 (46 aa).

Intrachain disulfides connect Cys-4–Cys-16 and Cys-10–Cys-26.

It belongs to the granulin family.

The protein resides in the secreted. Functionally, has antimicrobial activity against Gram-negative and Gram-positive bacteria. This chain is Antimicrobial peptide eNAP-1, found in Equus caballus (Horse).